Reading from the N-terminus, the 789-residue chain is Homocitrate dehydratase, mitochondrial (789 aa).

A mitochondrion-targeting transit peptide spans 1–14; sequence MLSSANRFYIKRHL. Substrate-binding positions include glutamine 96 and 189–191; that span reads DSH. 3 residues coordinate [4Fe-4S] cluster: cysteine 385, cysteine 448, and cysteine 451. Residues arginine 476, arginine 481, lysine 610, and 672–673 contribute to the substrate site; that span reads AR.

It belongs to the aconitase/IPM isomerase family. Requires [4Fe-4S] cluster as cofactor.

The protein resides in the mitochondrion. It catalyses the reaction (2R)-homocitrate = cis-homoaconitate + H2O. It functions in the pathway amino-acid biosynthesis; L-lysine biosynthesis via AAA pathway; L-alpha-aminoadipate from 2-oxoglutarate: step 2/5. Functionally, catalyzes the reversible dehydration of (R)-homocitrate to cis-homoaconitate, a step in the alpha-aminoadipate pathway for lysine biosynthesis. This chain is Homocitrate dehydratase, mitochondrial (ACO2), found in Saccharomyces cerevisiae (strain ATCC 204508 / S288c) (Baker's yeast).